We begin with the raw amino-acid sequence, 502 residues long: Archaemetzincin-1 (502 aa).

Zn(2+) is bound at residue His262. Glu263 serves as the catalytic Proton acceptor. Residues His266, Cys273, Cys278, Cys297, and Cys300 each coordinate Zn(2+). Residues 336–383 (GEPSVSEDTLPFSADSGMGCESDTEPVTSPSEPVTPDGWSHPFPDGPE) form a disordered region.

Belongs to the peptidase M54 family. Zn(2+) serves as cofactor.

Probable zinc metalloprotease. This chain is Archaemetzincin-1 (Amz1), found in Mus musculus (Mouse).